The primary structure comprises 376 residues: N-acetyldiaminopimelate deacetylase (376 aa).

Residue Asp69 is part of the active site. Glu128 (proton acceptor) is an active-site residue.

It belongs to the peptidase M20A family. N-acetyldiaminopimelate deacetylase subfamily.

The catalysed reaction is N-acetyl-(2S,6S)-2,6-diaminopimelate + H2O = (2S,6S)-2,6-diaminopimelate + acetate. It participates in amino-acid biosynthesis; L-lysine biosynthesis via DAP pathway; LL-2,6-diaminopimelate from (S)-tetrahydrodipicolinate (acetylase route): step 3/3. Catalyzes the conversion of N-acetyl-diaminopimelate to diaminopimelate and acetate. The chain is N-acetyldiaminopimelate deacetylase from Streptococcus uberis (strain ATCC BAA-854 / 0140J).